A 551-amino-acid polypeptide reads, in one-letter code: Transcription factor 7-like 1-B (551 aa).

Over residues 1–11 (MPQLNGGGGDE) the composition is skewed to gly residues. 3 disordered regions span residues 1-76 (MPQL…DLES), 298-326 (QEPNGELSPPVNTKSPGPNKKDEDKKPHI), and 392-525 (GWSA…PPSP). Residues 19–32 (ISFKDEGEQEDKIS) are compositionally biased toward basic and acidic residues. The segment covering 46 to 61 (SSLVSESENNSSSSDS) has biased composition (low complexity). Residues 63 to 76 (QTERRPQPRADLES) show a composition bias toward basic and acidic residues. The segment at residues 326–394 (IKKPLNAFML…LHSQLYPGWS (69 aa)) is a DNA-binding region (HMG box). The span at 449–468 (SPATPSAALASPAAPAATHS) shows a compositional bias: low complexity. Over residues 469–478 (EQAQPLSLTT) the composition is skewed to polar residues. Residues 493–505 (SSSSSSSSSSSGL) are compositionally biased toward low complexity.

Belongs to the TCF/LEF family. Interacts with ctnnb1.

The protein localises to the nucleus. In terms of biological role, participates in the Wnt signaling pathway. Probably binds to DNA and acts as a repressor in the absence of ctnnb1, and possibly as an activator in its presence. Regulates anterior-posterior patterning in the neuroectoderm by repressing posterior neural fates. Also required for hindbrain morphogenesis. In Danio rerio (Zebrafish), this protein is Transcription factor 7-like 1-B (tcf7l1b).